The sequence spans 505 residues: MAGGSKTRIHASLVSTLLLLLPLASAIHRSDFPASFLFGTATSSYQIEGAYLEGNKSLSNWDVFTHLPGNIKDGSNGDIADDHYHRYEEDVELMNSLGVNAYRFSISWSRILPKGRFGGVNPAGIDFYNKLIDSILLKGIQPFVTLTHYDIPQELEDRYGAWLNAEIQSDFGHFADVCFGAFGDRVKYWTTFNEPNVAVRHGYMLGTYPPSRCSPPFGHCARGGDSHAEPYVAAHNVILSHATAIEIYKRKYQSKQRGMIGMVLYSTWYEPLRDVPEDRLATERALAFETPWFLDPLVYGDYPPEMRQILGGRLPSFSPEDRRKLRYKLDFIGVNHYTTLYARDCMFSDCPQGQETQHALAAVTGESNGLPIGTPTAMPTFYVVPDGIEKMVKYFMRRYNNLPMFITENGYAQGGDSYTDAEDWIDDEDRIEYLEGYLTKLAKVIRDGADVRGYFAWSVVDNFEWLFGYTLRFGLYYIDYRTQERSPKLSALWYKEFLQNLHENQ.

Positions 1–26 (MAGGSKTRIHASLVSTLLLLLPLASA) are cleaved as a signal peptide. Gln46 serves as a coordination point for a beta-D-glucoside. N-linked (GlcNAc...) asparagine glycosylation occurs at Asn55. A beta-D-glucoside is bound by residues His148 and 193 to 194 (NE). The active-site Proton donor is the Glu194. A disulfide bridge connects residues Cys213 and Cys220. Tyr337 lines the a beta-D-glucoside pocket. A disulfide bridge links Cys345 with Cys350. Residues Glu408, Trp457, 464 to 465 (EW), and Phe473 contribute to the a beta-D-glucoside site. The active-site Nucleophile is the Glu408.

It belongs to the glycosyl hydrolase 1 family. In terms of tissue distribution, expressed in roots, leaves, flowers and pollen.

It carries out the reaction Hydrolysis of terminal, non-reducing beta-D-glucosyl residues with release of beta-D-glucose.. Its function is as follows. Hydrolyzes glycosides and monolignol glucosides. Can hydrolyze para-nitrophenyl beta-D-glucopyranoside (pNPGlc) in vitro. Hydrolyzes para-nitrophenyl beta-D-fucopyranoside, para-nitrophenyl beta-D-galactopyranoside and para-nitrophenyl beta-D-xylopyranoside in vitro. Hydrolyzes the monolignol glucosides coniferin and syringin with high catalytic efficiencies. The protein is Beta-glucosidase 18 of Oryza sativa subsp. japonica (Rice).